The sequence spans 177 residues: Large ribosomal subunit protein uL10 (177 aa).

Belongs to the universal ribosomal protein uL10 family. In terms of assembly, part of the ribosomal stalk of the 50S ribosomal subunit. The N-terminus interacts with L11 and the large rRNA to form the base of the stalk. The C-terminus forms an elongated spine to which L12 dimers bind in a sequential fashion forming a multimeric L10(L12)X complex.

Forms part of the ribosomal stalk, playing a central role in the interaction of the ribosome with GTP-bound translation factors. The chain is Large ribosomal subunit protein uL10 from Caldanaerobacter subterraneus subsp. tengcongensis (strain DSM 15242 / JCM 11007 / NBRC 100824 / MB4) (Thermoanaerobacter tengcongensis).